The chain runs to 568 residues: Urease subunit alpha (568 aa).

In terms of domain architecture, Urease spans 130–568; the sequence is GGIDTHIHFI…LPMAQRYFLF (439 aa). His-135, His-137, and Lys-218 together coordinate Ni(2+). Lys-218 bears the N6-carboxylysine mark. Substrate is bound at residue His-220. Ni(2+) contacts are provided by His-247 and His-273. His-321 acts as the Proton donor in catalysis. Asp-361 provides a ligand contact to Ni(2+).

It belongs to the metallo-dependent hydrolases superfamily. Urease alpha subunit family. As to quaternary structure, heterotrimer of UreA (gamma), UreB (beta) and UreC (alpha) subunits. Three heterotrimers associate to form the active enzyme. It depends on Ni cation as a cofactor. In terms of processing, carboxylation allows a single lysine to coordinate two nickel ions.

It localises to the cytoplasm. It carries out the reaction urea + 2 H2O + H(+) = hydrogencarbonate + 2 NH4(+). Its pathway is nitrogen metabolism; urea degradation; CO(2) and NH(3) from urea (urease route): step 1/1. The protein is Urease subunit alpha of Burkholderia mallei (strain NCTC 10247).